The primary structure comprises 300 residues: Jacalin-related lectin 32 (300 aa).

Ala2 carries the N-acetylalanine modification. Jacalin-type lectin domains are found at residues 2-146 (AQKV…YFTT) and 154-297 (AKKL…HILP).

The protein belongs to the jacalin lectin family.

In terms of biological role, involved in gametophytic development. This Arabidopsis thaliana (Mouse-ear cress) protein is Jacalin-related lectin 32 (JAL32).